Consider the following 103-residue polypeptide: Large ribosomal subunit protein bL21 (103 aa).

Belongs to the bacterial ribosomal protein bL21 family. As to quaternary structure, part of the 50S ribosomal subunit. Contacts protein L20.

In terms of biological role, this protein binds to 23S rRNA in the presence of protein L20. This Chromohalobacter salexigens (strain ATCC BAA-138 / DSM 3043 / CIP 106854 / NCIMB 13768 / 1H11) protein is Large ribosomal subunit protein bL21.